The sequence spans 330 residues: NmrA-like family domain-containing oxidoreductase notO (330 aa).

NADP(+)-binding positions include Val12–Leu17, His38–Gln42, Arg59–Ser60, Ile80–Ala82, and Leu160–Gly163. A helical transmembrane segment spans residues Val12–Ile32. The segment at Ser158–Ala202 is interaction with ASS1. N-linked (GlcNAc...) asparagine glycans are attached at residues Asn180 and Asn207.

This sequence belongs to the NmrA-type oxidoreductase family.

The protein localises to the membrane. Functionally, nmrA-like family domain-containing oxidoreductase; part of the gene cluster that mediates the biosynthesis of notoamide, a fungal indole alkaloid that belongs to a family of natural products containing a characteristic bicyclo[2.2.2]diazaoctane core. The first step of notoamide biosynthesis involves coupling of L-proline and L-tryptophan by the bimodular NRPS notE, to produce cyclo-L-tryptophan-L-proline called brevianamide F. The reverse prenyltransferase notF then acts as a deoxybrevianamide E synthase and converts brevianamide F to deoxybrevianamide E via reverse prenylation at C-2 of the indole ring leading to the bicyclo[2.2.2]diazaoctane core. Deoxybrevianamide E is further hydroxylated at C-6 of the indole ring, likely catalyzed by the cytochrome P450 monooxygenase notG, to yield 6-hydroxy-deoxybrevianamide E. 6-hydroxy-deoxybrevianamide E is a specific substrate of the prenyltransferase notC for normal prenylation at C-7 to produce 6-hydroxy-7-prenyl-deoxybrevianamide, also called notoamide S. As the proposed pivotal branching point in notoamide biosynthesis, notoamide S can be diverted to notoamide E through an oxidative pyran ring closure putatively catalyzed by either notH cytochrome P450 monooxygenase or the notD FAD-linked oxidoreductase. This step would be followed by an indole 2,3-epoxidation-initiated pinacol-like rearrangement catalyzed by the notB FAD-dependent monooxygenase leading to the formation of notoamide C and notoamide D. On the other hand notoamide S is converted to notoamide T by notH (or notD), a bifunctional oxidase that also functions as the intramolecular Diels-Alderase responsible for generation of (+)-notoamide T. To generate antipodal (-)-notoaminide T, notH' (or notD') in Aspergillus versicolor is expected to catalyze a Diels-Alder reaction leading to the opposite stereochemistry. The remaining oxidoreductase notD (or notH) likely catalyzes the oxidative pyran ring formation to yield (+)-stephacidin A. The FAD-dependent monooxygenase notI is highly similar to notB and is predicted to catalyze a similar conversion from (+)-stephacidin A to (-)-notoamide B via the 2,3-epoxidation of (+)-stephacidin A followed by a pinacol-type rearrangement. Finally, it remains unclear which enzyme could be responsible for the final hydroxylation steps leading to notoamide A and sclerotiamide. The function of notO in the notoamide biosynthesis has not been determined yet. The sequence is that of NmrA-like family domain-containing oxidoreductase notO from Aspergillus sp. (strain MF297-2).